The chain runs to 156 residues: Small ribosomal subunit protein uS7 (156 aa).

This sequence belongs to the universal ribosomal protein uS7 family. As to quaternary structure, part of the 30S ribosomal subunit. Contacts proteins S9 and S11.

Its function is as follows. One of the primary rRNA binding proteins, it binds directly to 16S rRNA where it nucleates assembly of the head domain of the 30S subunit. Is located at the subunit interface close to the decoding center, probably blocks exit of the E-site tRNA. This Acaryochloris marina (strain MBIC 11017) protein is Small ribosomal subunit protein uS7.